We begin with the raw amino-acid sequence, 954 residues long: Valine--tRNA ligase (954 aa).

Residues 48 to 58 (PNVTGSLHMGH) carry the 'HIGH' region motif. Positions 560–564 (KMSKS) match the 'KMSKS' region motif. An ATP-binding site is contributed by lysine 563. A coiled-coil region spans residues 883–953 (AGFINKEAEL…IQEQYKAIEA (71 aa)).

Belongs to the class-I aminoacyl-tRNA synthetase family. ValS type 1 subfamily. As to quaternary structure, monomer.

The protein localises to the cytoplasm. The enzyme catalyses tRNA(Val) + L-valine + ATP = L-valyl-tRNA(Val) + AMP + diphosphate. Functionally, catalyzes the attachment of valine to tRNA(Val). As ValRS can inadvertently accommodate and process structurally similar amino acids such as threonine, to avoid such errors, it has a 'posttransfer' editing activity that hydrolyzes mischarged Thr-tRNA(Val) in a tRNA-dependent manner. This is Valine--tRNA ligase from Haemophilus influenzae (strain 86-028NP).